A 288-amino-acid chain; its full sequence is Bifunctional protein FolD (288 aa).

NADP(+) is bound by residues 166-168, serine 191, and valine 232; that span reads GRS.

This sequence belongs to the tetrahydrofolate dehydrogenase/cyclohydrolase family. Homodimer.

It catalyses the reaction (6R)-5,10-methylene-5,6,7,8-tetrahydrofolate + NADP(+) = (6R)-5,10-methenyltetrahydrofolate + NADPH. It carries out the reaction (6R)-5,10-methenyltetrahydrofolate + H2O = (6R)-10-formyltetrahydrofolate + H(+). It functions in the pathway one-carbon metabolism; tetrahydrofolate interconversion. Catalyzes the oxidation of 5,10-methylenetetrahydrofolate to 5,10-methenyltetrahydrofolate and then the hydrolysis of 5,10-methenyltetrahydrofolate to 10-formyltetrahydrofolate. The sequence is that of Bifunctional protein FolD from Roseiflexus sp. (strain RS-1).